The sequence spans 288 residues: tRNA dimethylallyltransferase (288 aa).

ATP is bound at residue 17-24 (GPTASGKT). 19–24 (TASGKT) contributes to the substrate binding site.

This sequence belongs to the IPP transferase family. In terms of assembly, monomer. Mg(2+) is required as a cofactor.

It catalyses the reaction adenosine(37) in tRNA + dimethylallyl diphosphate = N(6)-dimethylallyladenosine(37) in tRNA + diphosphate. Its function is as follows. Catalyzes the transfer of a dimethylallyl group onto the adenine at position 37 in tRNAs that read codons beginning with uridine, leading to the formation of N6-(dimethylallyl)adenosine (i(6)A). In Jannaschia sp. (strain CCS1), this protein is tRNA dimethylallyltransferase.